The sequence spans 118 residues: Ribonuclease P protein component (118 aa).

It belongs to the RnpA family. Consists of a catalytic RNA component (M1 or rnpB) and a protein subunit.

It carries out the reaction Endonucleolytic cleavage of RNA, removing 5'-extranucleotides from tRNA precursor.. RNaseP catalyzes the removal of the 5'-leader sequence from pre-tRNA to produce the mature 5'-terminus. It can also cleave other RNA substrates such as 4.5S RNA. The protein component plays an auxiliary but essential role in vivo by binding to the 5'-leader sequence and broadening the substrate specificity of the ribozyme. This Vibrio vulnificus (strain CMCP6) protein is Ribonuclease P protein component.